We begin with the raw amino-acid sequence, 115 residues long: Androgen-binding protein homolog (115 aa).

Positions 1–23 (MKGTLLLLALLVTGELGFQTTEA) are cleaved as a signal peptide.

This sequence belongs to the secretoglobin family.

Its subcellular location is the secreted. In Mesocricetus auratus (Golden hamster), this protein is Androgen-binding protein homolog.